The chain runs to 248 residues: Small ribosomal subunit protein uS2 (248 aa).

The protein belongs to the universal ribosomal protein uS2 family.

The chain is Small ribosomal subunit protein uS2 from Janthinobacterium sp. (strain Marseille) (Minibacterium massiliensis).